We begin with the raw amino-acid sequence, 1025 residues long: Dihydropyrimidine dehydrogenase [NADP(+)] (1025 aa).

Positions 1 to 3 (MAP) are excised as a propeptide. A 4Fe-4S ferredoxin-type 1 domain is found at 69–100 (ERGALREAMRCLKCADAPCQKSCPTHLDIKSF). 4 residues coordinate [4Fe-4S] cluster: cysteine 79, cysteine 82, cysteine 87, and cysteine 91. Valine 129 contributes to the FAD binding site. [4Fe-4S] cluster-binding residues include cysteine 130, cysteine 136, cysteine 140, and glutamine 156. FAD contacts are provided by residues 194–198 (GAGPA), 218–226 (EKQEYVGGL), arginine 235, and leucine 261. NADP(+) contacts are provided by residues 340-343 (AGDT), 364-365 (RK), and arginine 371. N6-acetyllysine is present on lysine 384. NADP(+) is bound by residues 437–439 (AFG) and 481–487 (DIVGMAN). 480 to 489 (GDIVGMANTT) contacts FAD. FMN contacts are provided by residues serine 550 and 574–575 (KT). Substrate-binding positions include asparagine 609 and 668–670 (NLS). Cysteine 671 serves as the catalytic Proton acceptor. Lysine 709 is a binding site for FMN. 736–737 (NT) contributes to the substrate binding site. FMN-binding positions include glycine 767, 793-795 (TGG), and 816-817 (CS). 4Fe-4S ferredoxin-type domains are found at residues 944 to 976 (VVAV…FDPE) and 978 to 1007 (HLPT…MVSR). [4Fe-4S] cluster contacts are provided by cysteine 953, cysteine 956, cysteine 959, cysteine 963, cysteine 986, cysteine 989, cysteine 992, and cysteine 996.

The protein belongs to the dihydropyrimidine dehydrogenase family. In terms of assembly, homodimer. Requires FAD as cofactor. FMN serves as cofactor. The cofactor is [4Fe-4S] cluster.

It localises to the cytoplasm. The catalysed reaction is 5,6-dihydrouracil + NADP(+) = uracil + NADPH + H(+). The enzyme catalyses 5,6-dihydrothymine + NADP(+) = thymine + NADPH + H(+). The protein operates within amino-acid biosynthesis; beta-alanine biosynthesis. Inactivated by 5-iodouracil. Its function is as follows. Involved in pyrimidine base degradation. Catalyzes the reduction of uracil and thymine. The sequence is that of Dihydropyrimidine dehydrogenase [NADP(+)] (DPYD) from Sus scrofa (Pig).